A 143-amino-acid chain; its full sequence is AP-2 complex subunit sigma (143 aa).

This sequence belongs to the adaptor complexes small subunit family. Adaptor protein complex 2 (AP-2) is a heterotetramer composed of two large adaptins (alpha-type subunit apl3 and beta-type subunit apl1), a medium chain (mu-type subunit apm4) and a small adaptin (sigma-type subunit aps2).

It is found in the cell membrane. It localises to the membrane. The protein resides in the coated pit. In terms of biological role, component of the adaptor complexes which link clathrin to receptors in coated vesicles. Clathrin-associated protein complexes are believed to interact with the cytoplasmic tails of membrane proteins, leading to their selection and concentration. The polypeptide is AP-2 complex subunit sigma (aps2) (Schizosaccharomyces pombe (strain 972 / ATCC 24843) (Fission yeast)).